The primary structure comprises 645 residues: Sodium/potassium/calcium exchanger 3 (645 aa).

The signal sequence occupies residues 1-43 (MPPPGDQDCARRRSRRRRRDLLLSQLCFLASVALLLWSLSSLR). Residues 44–106 (EQKELDLMDL…DIFSNEDRRQ (63 aa)) are Extracellular-facing. Asparagine 70 and asparagine 85 each carry an N-linked (GlcNAc...) asparagine glycan. A helical transmembrane segment spans residues 107–127 (GAVVLHVLCAMYMFYALAIVC). Residues 128-151 (DDFFVPSLEKICERLHLSEDVAGA) lie on the Cytoplasmic side of the membrane. One copy of the Alpha-1 repeat lies at 148–188 (VAGATFMAAGSSAPELFTSVIGVFITKGDVGVGTIVGSAVF). The chain crosses the membrane as a helical span at residues 152 to 172 (TFMAAGSSAPELFTSVIGVFI). Residues 173-181 (TKGDVGVGT) are Extracellular-facing. A helical transmembrane segment spans residues 182-202 (IVGSAVFNILCIIGVCGLFAG). The Cytoplasmic portion of the chain corresponds to 203–209 (QVVALSS). Residues 210–230 (WCLLRDSIYYTLSVVALIVFI) form a helical membrane-spanning segment. Residues 231–234 (YDEK) are Extracellular-facing. A helical transmembrane segment spans residues 235–255 (VSWWESLVLVLMYLIYIVIMK). The Cytoplasmic portion of the chain corresponds to 256–486 (YNACIHQCFE…WFMVTFASST (231 aa)). Serine 307 is subject to Phosphoserine. 2 disordered regions span residues 379–398 (TVENGTGPSSAPDRGVNGTR) and 404–442 (AETDNETENENEDNENNENDEEEEEDEDDDEGPYTPFDP). Positions 404-435 (AETDNETENENEDNENNENDEEEEEDEDDDEG) are enriched in acidic residues. A helical membrane pass occupies residues 487 to 507 (LWIAAFSYMMVWMVTIIGYTL). Residues 508–512 (GIPDV) lie on the Extracellular side of the membrane. Residues 513-533 (IMGITFLAAGTSVPDCMASLI) form a helical membrane-spanning segment. One copy of the Alpha-2 repeat lies at 520–551 (AAGTSVPDCMASLIVARQGMGDMAVSNSIGSN). At 534 to 551 (VARQGMGDMAVSNSIGSN) the chain is on the cytoplasmic side. A helical membrane pass occupies residues 552–572 (VFDILIGLGLPWALQTLAVDY). Topologically, residues 573-582 (GSYIRLNSRG) are extracellular. The chain crosses the membrane as a helical span at residues 583–603 (LIYSVGLLLASVFVTVFGVHL). The Cytoplasmic portion of the chain corresponds to 604-617 (NKWQLDKKLGCGCL). The chain crosses the membrane as a helical span at residues 618–638 (FLYGVFLCFSIMTEFNVFTFV). Over 639–645 (NLPMCGD) the chain is Extracellular.

The protein belongs to the Ca(2+):cation antiporter (CaCA) (TC 2.A.19) family. SLC24A subfamily. Abundant in the brain. Highest levels found in selected thalamic nuclei, hippocampal CA1 neurons and in layer IV of the cerebral cortex. Expressed in dental tissues.

It is found in the cell membrane. It catalyses the reaction Ca(2+)(out) + K(+)(out) + 4 Na(+)(in) = Ca(2+)(in) + K(+)(in) + 4 Na(+)(out). Functionally, calcium, potassium:sodium antiporter that transports 1 Ca(2+) and 1 K(+) in exchange for 4 Na(+). The protein is Sodium/potassium/calcium exchanger 3 (Slc24a3) of Mus musculus (Mouse).